The sequence spans 939 residues: Aconitate hydratase A (939 aa).

Residues 433 to 453 form a disordered region; the sequence is GSGESLATGAEGRPSKPVTVA. Positions 475, 541, and 544 each coordinate [4Fe-4S] cluster.

Belongs to the aconitase/IPM isomerase family. In terms of assembly, monomer. Requires [4Fe-4S] cluster as cofactor.

The catalysed reaction is citrate = D-threo-isocitrate. The enzyme catalyses (2S,3R)-3-hydroxybutane-1,2,3-tricarboxylate = 2-methyl-cis-aconitate + H2O. It participates in carbohydrate metabolism; tricarboxylic acid cycle; isocitrate from oxaloacetate: step 2/2. Its pathway is organic acid metabolism; propanoate degradation. In terms of biological role, involved in the catabolism of short chain fatty acids (SCFA) via the tricarboxylic acid (TCA)(acetyl degradation route) and probably via the 2-methylcitrate cycle I (propionate degradation route). Catalyzes the reversible isomerization of citrate to isocitrate via cis-aconitate. Could catalyze the hydration of 2-methyl-cis-aconitate to yield (2R,3S)-2-methylisocitrate. The apo form of AcnA functions as a RNA-binding regulatory protein. This Corynebacterium glutamicum (strain ATCC 13032 / DSM 20300 / JCM 1318 / BCRC 11384 / CCUG 27702 / LMG 3730 / NBRC 12168 / NCIMB 10025 / NRRL B-2784 / 534) protein is Aconitate hydratase A (acn).